The chain runs to 189 residues: Elongation factor P (189 aa).

This sequence belongs to the elongation factor P family.

The protein localises to the cytoplasm. Its pathway is protein biosynthesis; polypeptide chain elongation. Functionally, involved in peptide bond synthesis. Stimulates efficient translation and peptide-bond synthesis on native or reconstituted 70S ribosomes in vitro. Probably functions indirectly by altering the affinity of the ribosome for aminoacyl-tRNA, thus increasing their reactivity as acceptors for peptidyl transferase. The polypeptide is Elongation factor P (Xanthobacter autotrophicus (strain ATCC BAA-1158 / Py2)).